The following is a 425-amino-acid chain: D-arabinitol transporter (425 aa).

Residues Met-1–Gln-7 are Cytoplasmic-facing. A helical transmembrane segment spans residues Trp-8–Gly-28. Over Asp-29–Ser-51 the chain is Extracellular. A helical membrane pass occupies residues Phe-52–Ala-72. Over Glu-73–Thr-80 the chain is Cytoplasmic. A helical transmembrane segment spans residues Met-81 to Gly-101. The Extracellular segment spans residues His-102 to Leu-107. The chain crosses the membrane as a helical span at residues Ile-108–Val-128. The Cytoplasmic portion of the chain corresponds to Ala-129–Ser-141. The chain crosses the membrane as a helical span at residues Ala-142–Pro-162. At Ser-163 to Met-172 the chain is on the extracellular side. The helical transmembrane segment at Gly-173–Leu-193 threads the bilayer. The Cytoplasmic portion of the chain corresponds to Arg-194–Asn-237. A helical transmembrane segment spans residues Thr-238–Phe-258. Topologically, residues Ser-259–Trp-263 are extracellular. A helical membrane pass occupies residues Leu-264 to Leu-284. At Gly-285–Arg-295 the chain is on the cytoplasmic side. The helical transmembrane segment at Trp-296–Phe-316 threads the bilayer. Residues Gly-317–Ala-323 lie on the Extracellular side of the membrane. A helical membrane pass occupies residues Leu-324–Phe-344. Topologically, residues Pro-345–Asn-360 are cytoplasmic. Residues Leu-361–Phe-381 form a helical membrane-spanning segment. At Ser-382 to Thr-383 the chain is on the extracellular side. A helical membrane pass occupies residues Ile-384 to Ile-404. Residues Arg-405–Ser-425 lie on the Cytoplasmic side of the membrane.

This sequence belongs to the major facilitator superfamily. Sugar transporter (TC 2.A.1.1) family. CsbX subfamily.

It is found in the cell membrane. The sequence is that of D-arabinitol transporter (dalT) from Klebsiella pneumoniae.